The following is a 423-amino-acid chain: AUGMIN subunit 4 (423 aa).

The stretch at 267-287 (IEEIERDEAALREDLYSADRK) forms a coiled coil.

Belongs to the HAUS4 family. As to quaternary structure, part of the augmin complex composed of 8 subunits. The complex acts on microtubules and interacts with gamma-tubulin in spindles and the phragmoplast.

It is found in the cytoplasm. Its subcellular location is the cytoskeleton. It localises to the spindle. The protein resides in the phragmoplast. Involved in microtubules reorganization during spindle and phragmoplast development. In Arabidopsis thaliana (Mouse-ear cress), this protein is AUGMIN subunit 4 (AUG4).